A 260-amino-acid chain; its full sequence is Proteasome subunit alpha 1 (260 aa).

Positions 237–260 are disordered; that stretch reads AEADLLDTGEDADDEAEDEDATEE. A compositionally biased stretch (acidic residues) spans 240 to 260; sequence DLLDTGEDADDEAEDEDATEE.

Belongs to the peptidase T1A family. In terms of assembly, the 20S proteasome core is composed of 14 alpha and 14 beta subunits that assemble into four stacked heptameric rings, resulting in a barrel-shaped structure. The two inner rings, each composed of seven catalytic beta subunits, are sandwiched by two outer rings, each composed of seven alpha subunits. The catalytic chamber with the active sites is on the inside of the barrel. Has a gated structure, the ends of the cylinder being occluded by the N-termini of the alpha-subunits. Is capped at one or both ends by the proteasome regulatory ATPase, PAN.

The protein resides in the cytoplasm. Its activity is regulated as follows. The formation of the proteasomal ATPase PAN-20S proteasome complex, via the docking of the C-termini of PAN into the intersubunit pockets in the alpha-rings, triggers opening of the gate for substrate entry. Interconversion between the open-gate and close-gate conformations leads to a dynamic regulation of the 20S proteasome proteolysis activity. Functionally, component of the proteasome core, a large protease complex with broad specificity involved in protein degradation. The chain is Proteasome subunit alpha 1 from Haloarcula marismortui (strain ATCC 43049 / DSM 3752 / JCM 8966 / VKM B-1809) (Halobacterium marismortui).